The primary structure comprises 62 residues: Kininogen-1 (62 aa).

Positions 1-22 (MDILKKSLFLVLFLGLVSFSIC) are cleaved as a signal peptide. Positions 24–62 (EEKRDTEEEENDDEIEEESEEKKREAPERPPGFTPFRIY) are disordered. The span at 30–42 (EEEENDDEIEEES) shows a compositional bias: acidic residues. Residue Pro-54 is modified to 4-hydroxyproline; partial. At Tyr-62 the chain carries Sulfotyrosine.

It belongs to the frog skin active peptide (FSAP) family. Bradykinin-related peptide subfamily. As to expression, expressed by the skin glands.

Its subcellular location is the secreted. In terms of biological role, inhibits ACE with a Ki of 1.6 uM, and targets B2 bradykinin receptor (BDKRB2). Provokes contraction of smooth muscle preparation (ileum). In vivo, induces an early hyperalgesic effects in living rats after intraplantar injection. The protein is Kininogen-1 of Phyllomedusa sauvagei (Sauvage's leaf frog).